A 168-amino-acid chain; its full sequence is NADH-ubiquinone oxidoreductase chain 6 (168 aa).

The next 5 membrane-spanning stretches (helical) occupy residues 1-21 (MKMM…VAFA), 27-47 (IYGG…VVSL), 50-70 (VFLG…VFGY), 87-107 (VVAF…YFMS), and 143-163 (WALA…LEVV).

This sequence belongs to the complex I subunit 6 family. As to quaternary structure, core subunit of respiratory chain NADH dehydrogenase (Complex I) which is composed of 45 different subunits.

The protein resides in the mitochondrion inner membrane. The catalysed reaction is a ubiquinone + NADH + 5 H(+)(in) = a ubiquinol + NAD(+) + 4 H(+)(out). Functionally, core subunit of the mitochondrial membrane respiratory chain NADH dehydrogenase (Complex I) which catalyzes electron transfer from NADH through the respiratory chain, using ubiquinone as an electron acceptor. Essential for the catalytic activity and assembly of complex I. This is NADH-ubiquinone oxidoreductase chain 6 (MT-ND6) from Didelphis virginiana (North American opossum).